We begin with the raw amino-acid sequence, 780 residues long: ERMVNLTLEMIYLLTGEHYIPRKKSDDGGALHAPGSVIQKENNKNDKKILELMSNIIQLLTGEVAIRTGHVSIYFSLDEWDYIKGNKDLYEEGIKEEPQQPLPPDCEYEDKSDITADLGGTLYNYNEPSKIRAEGGDFCANGNPTNPEISPMKQPPPANGIKEEVASCDGGRQSDCSINPLTEQIQGTDIPTPIMGYNHLIIQAIKDNENTSPHESRFDRHHTTHTTEKQFSHHINLHNDLSIHAGKKPFPCSECGKCFAGSSELNVHRRTHTRVKPFSCSQCGKCFSNQTKLKYHHRTHTGEKPFSCSECGKCFSTPHVRARHQKTHTGEKPFPCSECGKCFARSSDVTVHRRTHTGEKPYSCSQCGKCFTRSSDLNVHRRTHTGEKPYSCSHCGKCFTTSSELNVHRRTHTGEKPYSCSECGKSFPTSSEFTSHWKTHMEEKPFSCVQCGKCFSKDTHLKYHYRTHTGEKPFSCFECGKCFTHNGSLKVHLKIHKREADFCSKGNLTNPEISPVEHYPPTNEIKEEATSWEEGNQSDYSINSLTEQIQGPYTPTPIMEYNHLIMQDNKYDVNACHSPLQETDVTKHALHKRDIDRRQRTQTQLKYDHRTNTGDKPLSCSECGKCFSTYHVLARHQKTHTGEKPFSCSECEKCYARSSDLNVHRRTHTGEKPYSCSECGKCFTRSSDFNVHRRTHTGEKPYSCSECGRCFPTSSVLTSHWRTHTGEKPFSCTECGKCFSRETYLKYHHRTHTGEKPFSCSECGKCFTCNSSLKVHFQLH.

15 C2H2-type zinc fingers span residues 250-272, 278-300, 306-328, 334-356, 362-384, 390-412, 418-440, 446-468, 474-496, 618-640, 646-668, 674-696, 702-724, 730-752, and 758-780; these read FPCS…RRTH, FSCS…HRTH, FSCS…QKTH, YSCS…RRTH, YSCS…WKTH, FSCV…YRTH, FSCF…LKIH, LSCS…QKTH, FSCS…RRTH, YSCS…WRTH, FSCT…HRTH, and FSCS…FQLH.

The protein belongs to the krueppel C2H2-type zinc-finger protein family.

Its subcellular location is the nucleus. Functionally, may be involved in transcriptional regulation. The protein is Oocyte zinc finger protein XlCOF8.4 of Xenopus laevis (African clawed frog).